We begin with the raw amino-acid sequence, 133 residues long: Small ribosomal subunit protein uS8 (133 aa).

The protein belongs to the universal ribosomal protein uS8 family. In terms of assembly, part of the 30S ribosomal subunit. Contacts proteins S5 and S12.

In terms of biological role, one of the primary rRNA binding proteins, it binds directly to 16S rRNA central domain where it helps coordinate assembly of the platform of the 30S subunit. The polypeptide is Small ribosomal subunit protein uS8 (Deinococcus radiodurans (strain ATCC 13939 / DSM 20539 / JCM 16871 / CCUG 27074 / LMG 4051 / NBRC 15346 / NCIMB 9279 / VKM B-1422 / R1)).